Reading from the N-terminus, the 79-residue chain is Acyl carrier protein (79 aa).

Residues 2 to 77 (STIEERVKKI…QAIDYVKAHV (76 aa)) form the Carrier domain. An O-(pantetheine 4'-phosphoryl)serine modification is found at serine 37.

Belongs to the acyl carrier protein (ACP) family. In terms of processing, 4'-phosphopantetheine is transferred from CoA to a specific serine of apo-ACP by AcpS. This modification is essential for activity because fatty acids are bound in thioester linkage to the sulfhydryl of the prosthetic group.

It localises to the cytoplasm. The protein operates within lipid metabolism; fatty acid biosynthesis. Functionally, carrier of the growing fatty acid chain in fatty acid biosynthesis. The sequence is that of Acyl carrier protein from Xanthomonas axonopodis pv. citri (strain 306).